A 65-amino-acid polypeptide reads, in one-letter code: MPKMKTKSSAKKRFKVLGNGGVKRAHAFKRHILTKKTTKNKRQLRGTSMVNDRDLASVAKMLPYA.

Belongs to the bacterial ribosomal protein bL35 family.

The protein is Large ribosomal subunit protein bL35 of Neisseria meningitidis serogroup A / serotype 4A (strain DSM 15465 / Z2491).